The sequence spans 270 residues: 4-hydroxy-4-methyl-2-oxoglutarate aldolase tasA (270 aa).

His-49 (proton acceptor) is an active-site residue. Positions 156 and 182 each coordinate a divalent metal cation. Residue Asp-182 participates in substrate binding.

This sequence belongs to the HpcH/HpaI aldolase family. Homohexamer; trimer of dimers. The cofactor is Co(2+). Mn(2+) is required as a cofactor. Requires Zn(2+) as cofactor. It depends on Fe(2+) as a cofactor. Mg(2+) serves as cofactor.

The catalysed reaction is 4-hydroxy-4-methyl-2-oxoglutarate = 2 pyruvate. It participates in secondary metabolite biosynthesis. In terms of biological role, 4-hydroxy-4-methyl-2-oxoglutarate aldolase; part of the gene cluster that mediates the biosynthesis of the tetramic acids Sch210971 and Sch210972, potential anti-HIV fungal natural product that contain a decalin core. The PKS module of tasS together with the enoylreductase tasC catalyze the formation of the polyketide unit which is then conjugated to 4-hydroxyl-4-methyl glutamate (HMG) by the condensation domain of the tasS NRPS module. One unique structural feature of Sch210971 and Sch210972 is the tetramic acid motif proposed to be derived from the non-proteinogenic amino acid HMG, by a Dieckmann-type condensation catalyzed by the reductase domain of tasS. The aldolase tasA catalyzes the aldol condensation of 2 molecules of pyruvic acid to yield the intermediate 4-hydroxyl-4-methyl-2-oxoglutarate (HMOG), which can then be stereoselectively transaminated, may be by tasG, to form HMG. The Diels-Alderase tas3 then uses the Dieckmann product of tasS as substrate and catalyzes the Diels-Alder cycloaddition to form the decalin ring of Sch210971 and Sch210972. The chain is 4-hydroxy-4-methyl-2-oxoglutarate aldolase tasA from Hapsidospora irregularis.